The following is a 197-amino-acid chain: Small ribosomal subunit protein uS4c (197 aa).

One can recognise an S4 RNA-binding domain in the interval 85-161 (MRLDNILFRL…TGKELANHLN (77 aa)).

This sequence belongs to the universal ribosomal protein uS4 family. Part of the 30S ribosomal subunit. Contacts protein S5. The interaction surface between S4 and S5 is involved in control of translational fidelity.

It is found in the plastid. One of the primary rRNA binding proteins, it binds directly to 16S rRNA where it nucleates assembly of the body of the 30S subunit. Functionally, with S5 and S12 plays an important role in translational accuracy. This Cuscuta sandwichiana (Kauna'oa) protein is Small ribosomal subunit protein uS4c (rps4).